A 241-amino-acid polypeptide reads, in one-letter code: Triosephosphate isomerase (241 aa).

9 to 11 (NWK) contributes to the substrate binding site. H96 acts as the Electrophile in catalysis. E165 serves as the catalytic Proton acceptor. Residues G171, S204, and 225–226 (GG) contribute to the substrate site.

The protein belongs to the triosephosphate isomerase family. Homodimer.

The protein localises to the cytoplasm. The enzyme catalyses D-glyceraldehyde 3-phosphate = dihydroxyacetone phosphate. Its pathway is carbohydrate biosynthesis; gluconeogenesis. It functions in the pathway carbohydrate degradation; glycolysis; D-glyceraldehyde 3-phosphate from glycerone phosphate: step 1/1. In terms of biological role, involved in the gluconeogenesis. Catalyzes stereospecifically the conversion of dihydroxyacetone phosphate (DHAP) to D-glyceraldehyde-3-phosphate (G3P). The sequence is that of Triosephosphate isomerase from Picosynechococcus sp. (strain ATCC 27264 / PCC 7002 / PR-6) (Agmenellum quadruplicatum).